Here is a 312-residue protein sequence, read N- to C-terminus: DNA-directed RNA polymerase subunit alpha (312 aa).

The tract at residues 1–229 is alpha N-terminal domain (alpha-NTD); it reads MLQYQIDRVD…ALFQPLATVT (229 aa). Positions 241–312 are alpha C-terminal domain (alpha-CTD); it reads SAESQIPLEE…ISLPQSRTTA (72 aa).

The protein belongs to the RNA polymerase alpha chain family. In terms of assembly, in cyanobacteria the RNAP catalytic core is composed of 2 alpha, 1 beta, 1 beta', 1 gamma and 1 omega subunit. When a sigma factor is associated with the core the holoenzyme is formed, which can initiate transcription.

The catalysed reaction is RNA(n) + a ribonucleoside 5'-triphosphate = RNA(n+1) + diphosphate. DNA-dependent RNA polymerase catalyzes the transcription of DNA into RNA using the four ribonucleoside triphosphates as substrates. This is DNA-directed RNA polymerase subunit alpha from Synechococcus sp. (strain RCC307).